The primary structure comprises 89 residues: Small ribosomal subunit protein uS15 (89 aa).

This sequence belongs to the universal ribosomal protein uS15 family. As to quaternary structure, part of the 30S ribosomal subunit. Forms a bridge to the 50S subunit in the 70S ribosome, contacting the 23S rRNA.

In terms of biological role, one of the primary rRNA binding proteins, it binds directly to 16S rRNA where it helps nucleate assembly of the platform of the 30S subunit by binding and bridging several RNA helices of the 16S rRNA. Forms an intersubunit bridge (bridge B4) with the 23S rRNA of the 50S subunit in the ribosome. The chain is Small ribosomal subunit protein uS15 from Bacteroides thetaiotaomicron (strain ATCC 29148 / DSM 2079 / JCM 5827 / CCUG 10774 / NCTC 10582 / VPI-5482 / E50).